The primary structure comprises 97 residues: Small ribosomal subunit protein bS20c (97 aa).

Residues 1-15 (MSKNVSAIKKNQVSL) show a composition bias toward polar residues. A disordered region spans residues 1 to 20 (MSKNVSAIKKNQVSLRNKRK).

This sequence belongs to the bacterial ribosomal protein bS20 family.

It is found in the plastid. The protein resides in the chloroplast. Functionally, binds directly to 16S ribosomal RNA. The protein is Small ribosomal subunit protein bS20c of Gracilaria tenuistipitata var. liui (Red alga).